The chain runs to 238 residues: Ribonuclease PH (238 aa).

Residues arginine 86 and 124 to 126 (GTR) each bind phosphate.

Belongs to the RNase PH family. Homohexameric ring arranged as a trimer of dimers.

The enzyme catalyses tRNA(n+1) + phosphate = tRNA(n) + a ribonucleoside 5'-diphosphate. Its function is as follows. Phosphorolytic 3'-5' exoribonuclease that plays an important role in tRNA 3'-end maturation. Removes nucleotide residues following the 3'-CCA terminus of tRNAs; can also add nucleotides to the ends of RNA molecules by using nucleoside diphosphates as substrates, but this may not be physiologically important. Probably plays a role in initiation of 16S rRNA degradation (leading to ribosome degradation) during starvation. This chain is Ribonuclease PH, found in Brucella abortus (strain S19).